Consider the following 121-residue polypeptide: Small ribosomal subunit protein bS6 (121 aa).

The protein belongs to the bacterial ribosomal protein bS6 family.

In terms of biological role, binds together with bS18 to 16S ribosomal RNA. This Pelagibacter ubique (strain HTCC1062) protein is Small ribosomal subunit protein bS6.